Reading from the N-terminus, the 380-residue chain is Cytochrome b (380 aa).

4 consecutive transmembrane segments (helical) span residues 34–54, 78–99, 114–134, and 179–199; these read FGSL…LLAA, WLIR…YMHI, WNTG…GYVL, and FFTL…IHLT. Residues His84 and His98 each coordinate heme b. Heme b contacts are provided by His183 and His197. His202 is a binding site for a ubiquinone. 4 consecutive transmembrane segments (helical) span residues 227–247, 289–309, 321–341, and 348–368; these read LKDT…ALFS, LGGV…PLLH, LSQL…WVGS, and FIII…ILFP.

It belongs to the cytochrome b family. As to quaternary structure, the cytochrome bc1 complex contains 11 subunits: 3 respiratory subunits (MT-CYB, CYC1 and UQCRFS1), 2 core proteins (UQCRC1 and UQCRC2) and 6 low-molecular weight proteins (UQCRH/QCR6, UQCRB/QCR7, UQCRQ/QCR8, UQCR10/QCR9, UQCR11/QCR10 and a cleavage product of UQCRFS1). This cytochrome bc1 complex then forms a dimer. The cofactor is heme b.

It localises to the mitochondrion inner membrane. In terms of biological role, component of the ubiquinol-cytochrome c reductase complex (complex III or cytochrome b-c1 complex) that is part of the mitochondrial respiratory chain. The b-c1 complex mediates electron transfer from ubiquinol to cytochrome c. Contributes to the generation of a proton gradient across the mitochondrial membrane that is then used for ATP synthesis. The polypeptide is Cytochrome b (MT-CYB) (Balearica regulorum (Grey crowned-crane)).